The following is a 649-amino-acid chain: Threonine--tRNA ligase (649 aa).

The TGS domain maps to 1–66 (MVQITLPDGS…DNDAQLAIVT (66 aa)). The interval 247-538 (DHRKIGRELD…LIENHAGAMP (292 aa)) is catalytic. Positions 338, 389, and 515 each coordinate Zn(2+).

It belongs to the class-II aminoacyl-tRNA synthetase family. In terms of assembly, homodimer. Zn(2+) is required as a cofactor.

Its subcellular location is the cytoplasm. It catalyses the reaction tRNA(Thr) + L-threonine + ATP = L-threonyl-tRNA(Thr) + AMP + diphosphate + H(+). Its function is as follows. Catalyzes the attachment of threonine to tRNA(Thr) in a two-step reaction: L-threonine is first activated by ATP to form Thr-AMP and then transferred to the acceptor end of tRNA(Thr). Also edits incorrectly charged L-seryl-tRNA(Thr). In Bordetella bronchiseptica (strain ATCC BAA-588 / NCTC 13252 / RB50) (Alcaligenes bronchisepticus), this protein is Threonine--tRNA ligase.